Reading from the N-terminus, the 118-residue chain is MARIAGVNIPDNKHAVISLTYIFGVGRTTAQKILEAVGIAPSTKVSQLDDTQLDAIRAQVAEYMTEGDLRREVSMNIKRLVDLGCYRGIRHRRNLPVRGQNTKNNARTRKGPTRPLKR.

Positions 93–118 (RNLPVRGQNTKNNARTRKGPTRPLKR) are disordered. The span at 106–118 (ARTRKGPTRPLKR) shows a compositional bias: basic residues.

This sequence belongs to the universal ribosomal protein uS13 family. Part of the 30S ribosomal subunit. Forms a loose heterodimer with protein S19. Forms two bridges to the 50S subunit in the 70S ribosome.

In terms of biological role, located at the top of the head of the 30S subunit, it contacts several helices of the 16S rRNA. In the 70S ribosome it contacts the 23S rRNA (bridge B1a) and protein L5 of the 50S subunit (bridge B1b), connecting the 2 subunits; these bridges are implicated in subunit movement. Contacts the tRNAs in the A and P-sites. The protein is Small ribosomal subunit protein uS13 of Psychrobacter cryohalolentis (strain ATCC BAA-1226 / DSM 17306 / VKM B-2378 / K5).